Consider the following 506-residue polypeptide: Apolipoprotein N-acyltransferase (506 aa).

Transmembrane regions (helical) follow at residues 26–46, 66–86, 89–109, 113–133, 166–186, and 192–212; these read FAPYQIWLVALITPALLLILI, FASGISWVYVSIAGFGGMPLA, LFLMGALIAYLAIYPALFTWS, FFAKATLLNLLLAAPALWLIA, GVELLTLLLLVGAGAIAYAVI, and MLLIPTVLLSTGYGLSHWDWV. The CN hydrolase domain occupies 225-471; it reads IQGNVDQNLK…TAVLRAELTP (247 aa). Glu-264 acts as the Proton acceptor in catalysis. Lys-330 is an active-site residue. Cys-382 functions as the Nucleophile in the catalytic mechanism. Residues 479-499 traverse the membrane as a helical segment; the sequence is HQLGSWPLYIWVALSLALAWW.

It belongs to the CN hydrolase family. Apolipoprotein N-acyltransferase subfamily.

It localises to the cell inner membrane. The enzyme catalyses N-terminal S-1,2-diacyl-sn-glyceryl-L-cysteinyl-[lipoprotein] + a glycerophospholipid = N-acyl-S-1,2-diacyl-sn-glyceryl-L-cysteinyl-[lipoprotein] + a 2-acyl-sn-glycero-3-phospholipid + H(+). The protein operates within protein modification; lipoprotein biosynthesis (N-acyl transfer). Its function is as follows. Catalyzes the phospholipid dependent N-acylation of the N-terminal cysteine of apolipoprotein, the last step in lipoprotein maturation. In Vibrio vulnificus (strain CMCP6), this protein is Apolipoprotein N-acyltransferase.